Here is a 166-residue protein sequence, read N- to C-terminus: Large ribosomal subunit protein uL10 (166 aa).

Belongs to the universal ribosomal protein uL10 family. In terms of assembly, part of the ribosomal stalk of the 50S ribosomal subunit. The N-terminus interacts with L11 and the large rRNA to form the base of the stalk. The C-terminus forms an elongated spine to which L12 dimers bind in a sequential fashion forming a multimeric L10(L12)X complex.

Its function is as follows. Forms part of the ribosomal stalk, playing a central role in the interaction of the ribosome with GTP-bound translation factors. The protein is Large ribosomal subunit protein uL10 of Streptococcus equi subsp. zooepidemicus (strain MGCS10565).